The chain runs to 514 residues: MNQTTETDSMRINLQRTYKDAINALNSLQSNFASIEATKKLGPSVNRNELSINEVHEFTKRLGYTPTDFNKLNIIHITGTKGKGSTCAFTESILKQYTISKIGLYTSPHLKSVRERIRINGQPINQEKFAKYFFEVWDKFTTTKSDPQECPTLQPCDQVKPMYFKYLTILSFHVFLQEGVDTAIYEVGVGGTYDSTNIIDKPTVTGISALGIDHTFMLGNNIASITENKTGIFKKGVPAFVSRQLEYPETHELIEKRAKQLGVSSLEFVDTEDLPNVKLGLSGEFQKQNAALAIRIANSHLKTIGITQDLPEFNNNDGKIKKLSNKFIKGLENVDWPGRCQIINNNPTGITWYIDGAHTIESINASSTWFKQEQIKLEKPKRRALLFNQQGRENYAELLEKLFNVTYGTGSEPQIKFDDVIFTTNTTWSSGQFNSELISKNTSEDAVKKLEVQNNLSEVWRKLDGGVSKRHVFADIETAVNYLKDLGDKDLQVFVCGSLHLVGGFLVVLDNERD.

82 to 85 contributes to the ATP binding site; sequence GKGS. Residues S107, E186, and H214 each coordinate Mg(2+). Residues R339 and D355 each contribute to the ATP site.

It belongs to the folylpolyglutamate synthase family. The cofactor is a monovalent cation.

The protein resides in the mitochondrion inner membrane. Its subcellular location is the mitochondrion matrix. The protein localises to the cytoplasm. It catalyses the reaction (6S)-5,6,7,8-tetrahydrofolyl-(gamma-L-Glu)(n) + L-glutamate + ATP = (6S)-5,6,7,8-tetrahydrofolyl-(gamma-L-Glu)(n+1) + ADP + phosphate + H(+). It functions in the pathway cofactor biosynthesis; tetrahydrofolylpolyglutamate biosynthesis. Its function is as follows. Catalyzes conversion of folates to polyglutamate derivatives allowing concentration of folate compounds in the cell and the intracellular retention of these cofactors, which are important substrates for most of the folate-dependent enzymes that are involved in one-carbon transfer reactions involved in purine, pyrimidine and amino acid synthesis. In Candida albicans (Yeast), this protein is Folylpolyglutamate synthase (MET7).